Here is a 299-residue protein sequence, read N- to C-terminus: tRNA dimethylallyltransferase (299 aa).

10-17 (GPTAVGKT) contacts ATP. A substrate-binding site is contributed by 12–17 (TAVGKT). The segment at 35–38 (DSQQ) is interaction with substrate tRNA.

The protein belongs to the IPP transferase family. As to quaternary structure, monomer. The cofactor is Mg(2+).

The catalysed reaction is adenosine(37) in tRNA + dimethylallyl diphosphate = N(6)-dimethylallyladenosine(37) in tRNA + diphosphate. In terms of biological role, catalyzes the transfer of a dimethylallyl group onto the adenine at position 37 in tRNAs that read codons beginning with uridine, leading to the formation of N6-(dimethylallyl)adenosine (i(6)A). The chain is tRNA dimethylallyltransferase from Streptococcus thermophilus (strain ATCC BAA-491 / LMD-9).